A 557-amino-acid polypeptide reads, in one-letter code: Membrane protein insertase YidC (557 aa).

Residues 1–21 (MNWLRNSLIAAILVITYVLFI) form a helical membrane-spanning segment. The tract at residues 52-71 (SDDAVASSATEESDVPEVSV) is disordered. Transmembrane regions (helical) follow at residues 346-366 (TIDY…LDFI), 369-389 (LVGN…AVFF), 439-459 (FGGC…YWMI), 470-490 (FFLW…PLLM), and 517-537 (PIGF…YWVV).

It belongs to the OXA1/ALB3/YidC family. Type 1 subfamily. In terms of assembly, interacts with the Sec translocase complex via SecD. Specifically interacts with transmembrane segments of nascent integral membrane proteins during membrane integration.

It localises to the cell inner membrane. Functionally, required for the insertion and/or proper folding and/or complex formation of integral membrane proteins into the membrane. Involved in integration of membrane proteins that insert both dependently and independently of the Sec translocase complex, as well as at least some lipoproteins. Aids folding of multispanning membrane proteins. The sequence is that of Membrane protein insertase YidC from Saccharophagus degradans (strain 2-40 / ATCC 43961 / DSM 17024).